We begin with the raw amino-acid sequence, 499 residues long: MEKKYVLAIDQGTTSSRAMLFDRQGKVAGVAQREFGQIFPQPGWVEHNPREIMTSVYTTITELLNNAQIDAREISGIGITNQRETAVVWDKATGQPIYNAIVWQSRQTKDICTQLKEAGHEQMVRDKTGLLIDAYFSGTKVKWILDHVDGARERARKGELAFGTIDSWLIWNLTGGKVHVTDYTNASRTMMYNIHTLEWDAELLEMLDVPAQMLPEVRSSSEVYGMTQTQYFYGEQVPIAGIAGDQQAALFGQACFEPGMAKNTYGTGCFMLMNTGDKAVASKAGLLTTIAWGIDGKVEYALEGAIFVAGSVVQWLRDGLRMFGKASDSQAYAERAGDNDGVYFVPAFVGLGAPYWRSDIRGAVFGLTRGTSKEHFVRAAVESMAYQTRDVLTAMQSDSGIELKELRADGGAIANDFMAQFQSDILNVPVLRPEVAETTALGAAYLAGLATGFWSSREEIAKQWAVDRRFEPNMPEERREQLYAGWQQAVEATMGFRIS.

Residue Thr13 participates in ADP binding. ATP is bound by residues Thr13, Thr14, and Ser15. Thr13 provides a ligand contact to sn-glycerol 3-phosphate. Arg17 contributes to the ADP binding site. Residues Arg83, Glu84, Tyr135, and Asp245 each contribute to the sn-glycerol 3-phosphate site. 5 residues coordinate glycerol: Arg83, Glu84, Tyr135, Asp245, and Gln246. ADP is bound by residues Thr267 and Gly310. Positions 267, 310, 314, and 411 each coordinate ATP. Residues Gly411 and Asn415 each coordinate ADP.

Belongs to the FGGY kinase family.

It catalyses the reaction glycerol + ATP = sn-glycerol 3-phosphate + ADP + H(+). It functions in the pathway polyol metabolism; glycerol degradation via glycerol kinase pathway; sn-glycerol 3-phosphate from glycerol: step 1/1. With respect to regulation, inhibited by fructose 1,6-bisphosphate (FBP). Functionally, key enzyme in the regulation of glycerol uptake and metabolism. Catalyzes the phosphorylation of glycerol to yield sn-glycerol 3-phosphate. The sequence is that of Glycerol kinase from Xanthomonas campestris pv. campestris (strain ATCC 33913 / DSM 3586 / NCPPB 528 / LMG 568 / P 25).